The sequence spans 100 residues: Urease subunit gamma (100 aa).

It belongs to the urease gamma subunit family. As to quaternary structure, heterotrimer of UreA (gamma), UreB (beta) and UreC (alpha) subunits. Three heterotrimers associate to form the active enzyme.

The protein localises to the cytoplasm. It catalyses the reaction urea + 2 H2O + H(+) = hydrogencarbonate + 2 NH4(+). Its pathway is nitrogen metabolism; urea degradation; CO(2) and NH(3) from urea (urease route): step 1/1. This chain is Urease subunit gamma, found in Pseudomonas aeruginosa (strain UCBPP-PA14).